Here is a 2767-residue protein sequence, read N- to C-terminus: Serine/threonine-protein kinase ATM (2767 aa).

Residues 1713–2317 (NVVMASNHCQ…FYQLYPLVFA (605 aa)) form the FAT domain. A PI3K/PI4K catalytic domain is found at 2419–2734 (WTNETTQCGG…KLDGREAGTM (316 aa)). Residues 2425–2431 (QCGGLNA) are G-loop. The interval 2601–2609 (GLGDRHTQN) is catalytic loop. An activation loop region spans residues 2621–2645 (HIDFGIAFEQGKIQTTPETVPFRLT). The 33-residue stretch at 2735–2767 (GDSNVEAQVERLINEATLPSNLCMLFPGWDPHL) folds into the FATC domain.

The protein belongs to the PI3/PI4-kinase family. ATM subfamily.

The protein localises to the nucleus. The protein resides in the chromosome. It is found in the telomere. It catalyses the reaction L-seryl-[protein] + ATP = O-phospho-L-seryl-[protein] + ADP + H(+). It carries out the reaction L-threonyl-[protein] + ATP = O-phospho-L-threonyl-[protein] + ADP + H(+). Serine/threonine-protein kinase which recognizes the substrate consensus sequence [ST]-Q. Required to suppress spontaneous apoptosis of proliferating cells during development, and for their proper differentiation. Required for female fertility. Protects telomeres from fusion, maybe by recruiting or maintaining chromatin-modifying complexes such as Su(var)205/HP1. May activate checkpoint signaling in response to DNA double-stranded breaks induced by low-dose ionizing radiation. May phosphorylate histone H2AV. This chain is Serine/threonine-protein kinase ATM (tefu), found in Drosophila melanogaster (Fruit fly).